The primary structure comprises 521 residues: HTH-type transcriptional regulatory protein TyrR (521 aa).

The ACT domain maps to 2 to 72 (RLEVFCQDRI…GVTDVRTVPY (71 aa)). One can recognise a PAS domain in the interval 78–120 (EHRVLSALLVAMPEPVFSVDLRTKVELANPAAQNLFNLDENKI). Residues 207-436 (IVAVTPRMRQ…LKNALYRALT (230 aa)) form the Sigma-54 factor interaction domain. ATP contacts are provided by residues 235-242 (GDTGTGKD) and 298-307 (ANGGSVLLDE). A DNA-binding region (H-T-H motif) is located at residues 489-509 (STRKLAKRLGVSHTAIANKLR).

Homodimer. In presence of tyrosine (or high concentrations of phenylalanine or tryptophan) and ATP, it self-associates to form an hexamer.

The protein localises to the cytoplasm. Dual transcriptional regulator of the TyrR regulon, which includes a number of genes coding for proteins involved in the biosynthesis or transport of the three aromatic amino acids, phenylalanine, tyrosine and tryptophan. These three aromatic amino acids act as effectors which bind to the TyrR protein to form an active regulatory protein. Acts by binding specifically to TyrR boxes in the promoter region of the target genes. This is HTH-type transcriptional regulatory protein TyrR from Enterobacter agglomerans (Erwinia herbicola).